The primary structure comprises 443 residues: Serine/threonine-protein kinase 40 (443 aa).

Basic and acidic residues predominate over residues 1-11; the sequence is MKRRASERDAG. The interval 1-26 is disordered; sequence MKRRASERDAGETSARSKALCSSISG. Over residues 14 to 26 the composition is skewed to polar residues; the sequence is SARSKALCSSISG. Residues 35 to 332 enclose the Protein kinase domain; that stretch reads FILGPRLGNS…EVLESLGAII (298 aa). ATP is bound by residues 41-49 and Lys-66; that span reads LGNSPVPSI. Catalysis depends on Asp-197, which acts as the Proton acceptor.

It belongs to the protein kinase superfamily. CAMK Ser/Thr protein kinase family.

The protein localises to the nucleus. It localises to the cytoplasm. The enzyme catalyses L-seryl-[protein] + ATP = O-phospho-L-seryl-[protein] + ADP + H(+). It carries out the reaction L-threonyl-[protein] + ATP = O-phospho-L-threonyl-[protein] + ADP + H(+). In terms of biological role, may be a negative regulator of NF-kappa-B and p53-mediated gene transcription. The protein is Serine/threonine-protein kinase 40 (stk40) of Xenopus tropicalis (Western clawed frog).